Here is a 153-residue protein sequence, read N- to C-terminus: SsrA-binding protein (153 aa).

The protein belongs to the SmpB family.

The protein localises to the cytoplasm. Functionally, required for rescue of stalled ribosomes mediated by trans-translation. Binds to transfer-messenger RNA (tmRNA), required for stable association of tmRNA with ribosomes. tmRNA and SmpB together mimic tRNA shape, replacing the anticodon stem-loop with SmpB. tmRNA is encoded by the ssrA gene; the 2 termini fold to resemble tRNA(Ala) and it encodes a 'tag peptide', a short internal open reading frame. During trans-translation Ala-aminoacylated tmRNA acts like a tRNA, entering the A-site of stalled ribosomes, displacing the stalled mRNA. The ribosome then switches to translate the ORF on the tmRNA; the nascent peptide is terminated with the 'tag peptide' encoded by the tmRNA and targeted for degradation. The ribosome is freed to recommence translation, which seems to be the essential function of trans-translation. This chain is SsrA-binding protein, found in Pelotomaculum thermopropionicum (strain DSM 13744 / JCM 10971 / SI).